The following is a 134-amino-acid chain: Large ribosomal subunit protein uL16c (134 aa).

The protein belongs to the universal ribosomal protein uL16 family. In terms of assembly, part of the 50S ribosomal subunit.

Its subcellular location is the plastid. The protein localises to the chloroplast. The polypeptide is Large ribosomal subunit protein uL16c (Nephroselmis olivacea (Green alga)).